Here is a 232-residue protein sequence, read N- to C-terminus: Orotidine 5'-phosphate decarboxylase (232 aa).

Substrate contacts are provided by residues Asp16, Lys38, 65-74 (DLKLHDIGNT), Thr119, Arg180, Gln189, Gly209, and Arg210. Residue Lys67 is the Proton donor of the active site.

Belongs to the OMP decarboxylase family. Type 1 subfamily. In terms of assembly, homodimer.

It carries out the reaction orotidine 5'-phosphate + H(+) = UMP + CO2. It functions in the pathway pyrimidine metabolism; UMP biosynthesis via de novo pathway; UMP from orotate: step 2/2. In terms of biological role, catalyzes the decarboxylation of orotidine 5'-monophosphate (OMP) to uridine 5'-monophosphate (UMP). This chain is Orotidine 5'-phosphate decarboxylase, found in Methylorubrum extorquens (strain PA1) (Methylobacterium extorquens).